The chain runs to 332 residues: Cinnamoyl-CoA reductase 2 (332 aa).

Residues 12–18 (GAGGYIA), R37, K43, 63–64 (DL), 83–85 (TAS), Y156, K160, 183–186 (PVLV), and S198 contribute to the NADP(+) site. Cysteines 149 and 157 form a disulfide. The active-site Proton donor is the K160.

It belongs to the NAD(P)-dependent epimerase/dehydratase family. Dihydroflavonol-4-reductase subfamily. In terms of tissue distribution, expressed at low levels in leaves, stems and flowers.

The catalysed reaction is (E)-cinnamaldehyde + NADP(+) + CoA = (E)-cinnamoyl-CoA + NADPH + H(+). It participates in aromatic compound metabolism; phenylpropanoid biosynthesis. In terms of biological role, cinnamoyl-CoA reductase probably involved in the formation of phenolic compounds associated with the hypersensitive response. Seems not to be involved in lignin biosynthesis. This chain is Cinnamoyl-CoA reductase 2 (CCR2), found in Arabidopsis thaliana (Mouse-ear cress).